The following is a 63-amino-acid chain: Small ribosomal subunit protein eS31 (63 aa).

Zn(2+) contacts are provided by Cys-34, Cys-37, Cys-53, and Cys-56. A C4-type zinc finger spans residues 34–56 (CPKCGSVMAFHREPVPRWHCGKC).

It belongs to the eukaryotic ribosomal protein eS31 family. In terms of assembly, part of the 30S ribosomal subunit. Requires Zn(2+) as cofactor.

In Pyrobaculum neutrophilum (strain DSM 2338 / JCM 9278 / NBRC 100436 / V24Sta) (Thermoproteus neutrophilus), this protein is Small ribosomal subunit protein eS31.